The primary structure comprises 631 residues: Nucleoside triphosphatase I (631 aa).

Residues 42–204 (FLGLDSMHSL…TMLVNLLRPG (163 aa)) form the Helicase ATP-binding domain. 55-62 (HETGVGKT) provides a ligand contact to ATP. The DEXH box signature appears at 141 to 144 (DECH). A Helicase C-terminal domain is found at 367-532 (KFIDVCLGIL…EFVQLFRVFK (166 aa)).

It belongs to the helicase family. NPH I subfamily. As to quaternary structure, monomer.

It catalyses the reaction a ribonucleoside 5'-triphosphate + H2O = a ribonucleoside 5'-diphosphate + phosphate + H(+). Functionally, serves two roles in transcription; it acts in concert with viral termination factor/capping enzyme to catalyze release of UUUUUNU-containing nascent RNA from the elongation complex, and it acts by itself as a polymerase elongation factor to facilitate readthrough of intrinsic pause sites. The chain is Nucleoside triphosphatase I (NPH1) from Homo sapiens (Human).